The sequence spans 802 residues: Neuronal PAS domain-containing protein 4 (802 aa).

A basic motif; degenerate region spans residues 1 to 13; sequence MYRSTKGASKARR. The region spanning 1-53 is the bHLH domain; the sequence is MYRSTKGASKARRDQINAEIRNLKELLPLAEADKVRLSYLHIMSLACIYTRKG. Residues 5-38 adopt a coiled-coil conformation; the sequence is TKGASKARRDQINAEIRNLKELLPLAEADKVRLS. Positions 14–53 are helix-loop-helix motif; sequence DQINAEIRNLKELLPLAEADKVRLSYLHIMSLACIYTRKG. PAS domains are found at residues 70–144 and 203–273; these read SAQE…LDTD and PGPG…LAES. Residues 278–317 form the PAC domain; sequence AEMVVRLQAKTGGWAWIYCLLYSEGPEGPITANNYPISDM. Composition is skewed to polar residues over residues 466–476, 506–518, and 532–555; these read FSDQLTPSSAT, STFP…STAT, and TPPS…QLSP. Disordered regions lie at residues 466-485 and 506-555; these read FSDQ…TSPL and STFP…QLSP. A coiled-coil region spans residues 624-648; sequence YSEKEQNEIDRLIQQISQLAQGMDR. The segment at 717–749 is disordered; it reads LSTPDPSEEWGSGDPEAEGPGGAPSPCNNLSPE.

Efficient DNA binding requires dimerization with another bHLH protein. Heterodimer; forms a heterodimer with ARNT, ARNT2 or BMAL1. Ubiquitinated, leading to degradation by the proteosome. In terms of tissue distribution, brain.

Its subcellular location is the nucleus. In terms of biological role, transcription factor expressed in neurons of the brain that regulates the excitatory-inhibitory balance within neural circuits and is required for contextual memory in the hippocampus. Plays a key role in the structural and functional plasticity of neurons. Acts as an early-response transcription factor in both excitatory and inhibitory neurons, where it induces distinct but overlapping sets of late-response genes in these two types of neurons, allowing the synapses that form on inhibitory and excitatory neurons to be modified by neuronal activity in a manner specific to their function within a circuit, thereby facilitating appropriate circuit responses to sensory experience. In excitatory neurons, activates transcription of BDNF, which in turn controls the number of GABA-releasing synapses that form on excitatory neurons, thereby promoting an increased number of inhibitory synapses on excitatory neurons. In inhibitory neurons, regulates a distinct set of target genes that serve to increase excitatory input onto somatostatin neurons, probably resulting in enhanced feedback inhibition within cortical circuits. The excitatory and inhibitory balance in neurons affects a number of processes, such as short-term and long-term memory, acquisition of experience, fear memory, response to stress and social behavior. Acts as a regulator of dendritic spine development in olfactory bulb granule cells in a sensory-experience-dependent manner by regulating expression of MDM2. Efficient DNA binding requires dimerization with another bHLH protein, such as ARNT, ARNT2 or BMAL1. Can activate the CME (CNS midline enhancer) element. The sequence is that of Neuronal PAS domain-containing protein 4 from Homo sapiens (Human).